The following is a 78-amino-acid chain: Acyl carrier protein (78 aa).

Residues 2-77 (SNIEQQVKKI…LAIDYINAHN (76 aa)) enclose the Carrier domain. Residue Ser37 is modified to O-(pantetheine 4'-phosphoryl)serine.

This sequence belongs to the acyl carrier protein (ACP) family. In terms of processing, 4'-phosphopantetheine is transferred from CoA to a specific serine of apo-ACP by AcpS. This modification is essential for activity because fatty acids are bound in thioester linkage to the sulfhydryl of the prosthetic group.

The protein localises to the cytoplasm. Its pathway is lipid metabolism; fatty acid biosynthesis. Its function is as follows. Carrier of the growing fatty acid chain in fatty acid biosynthesis. The sequence is that of Acyl carrier protein from Neisseria meningitidis serogroup C / serotype 2a (strain ATCC 700532 / DSM 15464 / FAM18).